A 155-amino-acid polypeptide reads, in one-letter code: Ribosomal RNA large subunit methyltransferase H (155 aa).

Residues Leu73, Gly104, and 123–128 (LSALTL) contribute to the S-adenosyl-L-methionine site.

This sequence belongs to the RNA methyltransferase RlmH family. Homodimer.

It is found in the cytoplasm. It carries out the reaction pseudouridine(1915) in 23S rRNA + S-adenosyl-L-methionine = N(3)-methylpseudouridine(1915) in 23S rRNA + S-adenosyl-L-homocysteine + H(+). Specifically methylates the pseudouridine at position 1915 (m3Psi1915) in 23S rRNA. This Chromohalobacter salexigens (strain ATCC BAA-138 / DSM 3043 / CIP 106854 / NCIMB 13768 / 1H11) protein is Ribosomal RNA large subunit methyltransferase H.